Reading from the N-terminus, the 619-residue chain is MGKIRKLDDQLSNKIAAGEVVERPASVVKELVENAVDANSTIIEIELEEAGLTKIRVIDNGDGMEEDDCLVAFERHATSKIKDEHDLFRIRTLGFRGEALPSIASVSEVEMKTSTGDGPGTKVVLKGGKLVVHERTTSRKGTDITVSNLFFNTPARLKYMKTIHTELGHVTDVVNRLAMAHPDISFRLRHHGKQLLYTSGNGDVRHVLAAIYGMDVAKKMIPIQAESLDFTVQGYISLPEVTRASRNYISTIVNGRYVRNIPLAKAIEAGYHTLLPIGRYPIVFLSIAMDPILVDVNVHPAKLEVRFSKEAELNELVTQAIRQALQARTLIPEMMIKQKETPKPKAEQTAWTFEHVVKEPFVSPLVHVDEPKQVDEPKQSSPVQEPKEEIPSFLPTVESKQNDVDDELVEMDEQTESSDEQEHVNDRLPPLYPIGQMHGTYILAQNERGLYIIDQHAAQERIKYEYFREKVGEVINEVQELLVPLTFHYPTDEYVLIDAHREELAKCGVFLEPFGHNTFIVRSHPSWFPKGEEAEIIEEMIQQVIDMKKVDMKQLREKAAILMSCKRSIKANEYLRDDEIFALLESLRKTTDPFTCPHGRPIIIHFSTYELEKMFKRVM.

Residues 368-378 (VDEPKQVDEPK) show a composition bias toward basic and acidic residues. Positions 368–403 (VDEPKQVDEPKQSSPVQEPKEEIPSFLPTVESKQND) are disordered.

Belongs to the DNA mismatch repair MutL/HexB family.

In terms of biological role, this protein is involved in the repair of mismatches in DNA. It is required for dam-dependent methyl-directed DNA mismatch repair. May act as a 'molecular matchmaker', a protein that promotes the formation of a stable complex between two or more DNA-binding proteins in an ATP-dependent manner without itself being part of a final effector complex. The protein is DNA mismatch repair protein MutL of Geobacillus sp. (strain WCH70).